Here is a 93-residue protein sequence, read N- to C-terminus: MPNKRQAAKRARRDERRREINALHVSRMKTAIRNFKKLIQAKDLETAKAKLPFVVSMIQHAAAKGSIHKNEAARRVSRVTQLLNKALASNEQK.

The protein belongs to the bacterial ribosomal protein bS20 family.

Binds directly to 16S ribosomal RNA. The protein is Small ribosomal subunit protein bS20 of Hydrogenobaculum sp. (strain Y04AAS1).